Consider the following 273-residue polypeptide: uncharacterized protein (273 aa).

This sequence belongs to the ycf23 family.

The protein resides in the plastid. The protein localises to the chloroplast. This is an uncharacterized protein from Pyropia yezoensis (Susabi-nori).